A 206-amino-acid chain; its full sequence is Protein Nef (206 aa).

Residue G2 is the site of N-myristoyl glycine; by host attachment. Phosphoserine; by host is present on S6. Residues 62-65 are acidic; interacts with host PACS1 and PACS2; stabilizes the interaction of NEF/MHC-I with host AP1M1; necessary for MHC-I internalization; sequence EEEE. The SH3-binding; interaction with Src family tyrosine kinases stretch occupies residues 69–78; it reads PVTPQVPLRP. Positions 72–75 match the PxxP; stabilizes the interaction of NEF/MHC-I with host AP1M1; necessary for MHC-I internalization motif; the sequence is PQVP. The interval 108 to 124 is mediates dimerization, Nef-PTE1 interaction; the sequence is DILDLWIYHTQGYFPDW. The binding to ATP6V1H stretch occupies residues 148-180; it reads VEPDKIEEANKGENTSLLHPVSLHGMDDPEREV. The short motif at 164–165 is the Dileucine internalization motif; necessary for CD4 internalization element; it reads LL. The Diacidic; necessary for CD4 internalization motif lies at 174–175; sequence DD.

The protein belongs to the lentivirus primate group Nef protein family. In terms of assembly, monomer; cytosolic form. Homodimer; membrane bound form. Interacts with Nef associated p21-activated kinase (PAK2); this interaction activates PAK2. Associates with the Nef-MHC-I-AP1 complex; this complex is required for MHC-I internalization. Interacts (via C-terminus) with host PI3-kinase. Interacts with host PACS1; this interaction seems to be weak. Interacts with host PACS2. Interacts with host LCK and MAPK3; these interactions inhibit the kinase activity of the latter. Interacts with host ATP6V1H; this interaction may play a role in CD4 endocytosis. Associates with the CD4-Nef-AP2 complex; this complex is required for CD4 internalization. Interacts with host AP2 subunit alpha and AP2 subunit sigma2. Interacts with TCR-zeta chain; this interaction up-regulates the Fas ligand (FasL) surface expression. Interacts with host HCK, LYN, and SRC; these interactions activate the Src family kinases. Interacts with MAP3K5; this interaction inhibits the Fas and TNFR-mediated death signals. Interacts with beta-COP and PTE1. Interacts with human RACK1; this increases Nef phosphorylation by PKC. Interacts with TP53; this interaction decreases the half-life of TP53, protecting the infected cell against p53-mediated apoptosis. Post-translationally, phosphorylated on serine residues, probably by host PKCdelta and theta. Myristoylated. In terms of processing, the virion-associated Nef proteins are cleaved by the viral protease to release the soluble C-terminal core protein. Nef is probably cleaved concomitantly with viral structural proteins on maturation of virus particles.

It localises to the host cell membrane. Its subcellular location is the virion. It is found in the secreted. The protein localises to the host Golgi apparatus membrane. In terms of biological role, factor of infectivity and pathogenicity, required for optimal virus replication. Alters numerous pathways of T-lymphocyte function and down-regulates immunity surface molecules in order to evade host defense and increase viral infectivity. Alters the functionality of other immunity cells, like dendritic cells, monocytes/macrophages and NK cells. In infected CD4(+) T-lymphocytes, down-regulates the surface MHC-I, mature MHC-II, CD4, CD28, CCR5 and CXCR4 molecules. Mediates internalization and degradation of host CD4 through the interaction of with the cytoplasmic tail of CD4, the recruitment of AP-2 (clathrin adapter protein complex 2), internalization through clathrin coated pits, and subsequent transport to endosomes and lysosomes for degradation. Diverts host MHC-I molecules to the trans-Golgi network-associated endosomal compartments by an endocytic pathway to finally target them for degradation. MHC-I down-regulation may involve AP-1 (clathrin adapter protein complex 1) or possibly Src family kinase-ZAP70/Syk-PI3K cascade recruited by PACS2. In consequence infected cells are masked for immune recognition by cytotoxic T-lymphocytes. Decreasing the number of immune receptors also prevents reinfection by more HIV particles (superinfection). Down-regulates host SERINC3 and SERINC5 thereby excluding these proteins from the viral particles. Virion infectivity is drastically higher when SERINC3 or SERINC5 are excluded from the viral envelope, because these host antiviral proteins impair the membrane fusion event necessary for subsequent virion penetration. Functionally, bypasses host T-cell signaling by inducing a transcriptional program nearly identical to that of anti-CD3 cell activation. Interaction with TCR-zeta chain up-regulates the Fas ligand (FasL). Increasing surface FasL molecules and decreasing surface MHC-I molecules on infected CD4(+) cells send attacking cytotoxic CD8+ T-lymphocytes into apoptosis. Its function is as follows. Plays a role in optimizing the host cell environment for viral replication without causing cell death by apoptosis. Protects the infected cells from apoptosis in order to keep them alive until the next virus generation is ready to strike. Inhibits the Fas and TNFR-mediated death signals by blocking MAP3K5/ASK1. Decreases the half-life of TP53, protecting the infected cell against p53-mediated apoptosis. Inhibits the apoptotic signals regulated by the Bcl-2 family proteins through the formation of a Nef/PI3-kinase/PAK2 complex that leads to activation of PAK2 and induces phosphorylation of Bad. In terms of biological role, extracellular Nef protein targets CD4(+) T-lymphocytes for apoptosis by interacting with CXCR4 surface receptors. The sequence is that of Protein Nef from Human immunodeficiency virus type 1 group M subtype B (isolate HXB2) (HIV-1).